A 210-amino-acid polypeptide reads, in one-letter code: Rho-related GTP-binding protein RhoD (210 aa).

24-31 (GDGGCGKT) serves as a coordination point for GTP. The short motif at 46 to 54 (YSPTVFERY) is the Effector region element. Residues 71–75 (DTAGQ) and 129–132 (CKID) each bind GTP. Cys207 carries the post-translational modification Cysteine methyl ester. A lipid anchor (S-geranylgeranyl cysteine) is attached at Cys207. Residues 208–210 (LAT) constitute a propeptide, removed in mature form.

Belongs to the small GTPase superfamily. Rho family. As to quaternary structure, interacts with PAK5. Interacts (in GTP-bound form) with DAPK3, FILIP1 and WHAMM. Interacts (independent of GTP-loaded status) with ANKFY1. In terms of tissue distribution, widely expressed.

The protein resides in the cell membrane. It is found in the early endosome. In terms of biological role, involved in endosome dynamics. May coordinate membrane transport with the function of the cytoskeleton. Involved in the internalization and trafficking of activated tyrosine kinase receptors such as PDGFRB. Participates in the reorganization of actin cytoskeleton; the function seems to involve WHAMM and includes regulation of filopodia formation and actin filament bundling. Can modulate the effect of DAPK3 in reorganization of actin cytoskeleton and focal adhesion dissolution. This chain is Rho-related GTP-binding protein RhoD (Rhod), found in Mus musculus (Mouse).